We begin with the raw amino-acid sequence, 269 residues long: Peptide deformylase 1B, chloroplastic (269 aa).

The transit peptide at 1–51 (MAARLHLRLGPRLRGFASSFAPLLAAHPRALPLSRMGSVAPLAAARARRGF) directs the protein to the chloroplast. Fe cation-binding residues include Cys-168 and His-210. Glu-211 is an active-site residue. His-214 serves as a coordination point for Fe cation.

The protein belongs to the polypeptide deformylase family. Homodimer. Fe(2+) is required as a cofactor. Mainly expressed in mature leaves and sheaths.

It localises to the plastid. Its subcellular location is the chloroplast stroma. The protein localises to the mitochondrion. It carries out the reaction N-terminal N-formyl-L-methionyl-[peptide] + H2O = N-terminal L-methionyl-[peptide] + formate. Inhibited by actinonin. Functionally, removes the formyl group from the N-terminal Met of newly synthesized proteins. This Oryza sativa subsp. japonica (Rice) protein is Peptide deformylase 1B, chloroplastic (PDF1B).